The chain runs to 240 residues: Uridylate cyclase (240 aa).

In terms of domain architecture, Guanylate cyclase spans 45-180 (TYLYADMANS…RAPNLAAKLS (136 aa)). Tyr48 is an a ribonucleoside 5'-triphosphate binding site. Residues Asp50 and Asp94 each contribute to the Mn(2+) site. Arg95 is an a ribonucleoside 5'-triphosphate binding site.

The protein belongs to the adenylyl cyclase class-4/guanylyl cyclase family. Pyrimidine cyclase subfamily. Homodimer. Mn(2+) serves as cofactor.

The protein resides in the cytoplasm. The catalysed reaction is UTP = 3',5'-cyclic UMP + diphosphate. Functionally, pycsar (pyrimidine cyclase system for antiphage resistance) provides immunity against bacteriophage. The pyrimidine cyclase (PycC) synthesizes cyclic nucleotides in response to infection; these serve as specific second messenger signals. The signals activate the adjacent effector, leading to bacterial cell death and abortive phage infection. A clade B Pycsar system. In terms of biological role, the pyrimidine cyclase gene of a two-gene Pycsar system, weakly generates cyclic UMP (cUMP) from UTP, has little to no activity on ATP, CTP or GTP. Expression of this and adjacent effector RsmPycTM (AC A0A1V0HUU2) probably confers resistance to bacteriophage. The genes are probably only expressed in response to bacteriophage infection. The sequence is that of Uridylate cyclase from Rhodovulum sp. (strain MB263).